The chain runs to 457 residues: TnpB-like protein ORF457 (457 aa).

The tract at residues 1–22 (MPPSSGQLLGDEEREPTSTPAI) is disordered.

The protein in the N-terminal section; belongs to the transposase 2 family. This sequence in the C-terminal section; belongs to the transposase 35 family.

This Acidianus two-tailed virus (ATV) protein is TnpB-like protein ORF457.